A 205-amino-acid polypeptide reads, in one-letter code: Guanylate kinase (205 aa).

The Guanylate kinase-like domain maps to 6–184; that stretch reads GLLIVLSGPA…AVERIKAIVT (179 aa). 13–20 contributes to the ATP binding site; it reads GPAGVGKG.

This sequence belongs to the guanylate kinase family.

Its subcellular location is the cytoplasm. It catalyses the reaction GMP + ATP = GDP + ADP. Functionally, essential for recycling GMP and indirectly, cGMP. The chain is Guanylate kinase from Shouchella clausii (strain KSM-K16) (Alkalihalobacillus clausii).